We begin with the raw amino-acid sequence, 902 residues long: MSEISRVALFGKLNSLAYKAIEAATVFCKLRGNPYVELVHWFHQILQLPDSDLHQIVRQSGIDPARLAKDLTEALDRLPRGSTSITDLSSHVEEAVERGWVYGSLMFGESQVRTGYLVIGILKTPSLRHALTGLSAEFAKLKVEALTERFDEYVGASPENGLSASDGFNAGAAPGEASGALAPSAMGKQEALKRFTVDLTEQARSGKLDPIVGRDEEIRQLVDILMRRRQNNPILTGEAGVGKTAVVEGFALRIVAGDVPPALKDVELRALDVGLLQAGASMKGEFEQRLRQVIEDVQSSEKPIILFIDEAHTLVGAGGAAGTGDAANLLKPALARGTLRTVAATTWAEYKKHIEKDPALTRRFQVVQVDEPSEHKAILMMRGVASTMEKHHQVQILDEALEAAVRLSHRYIPARQLPDKSVSLLDTACARTAISLHAVPAEVDDSRRRIEALETELAIIRRESAIGVATAERQRNAETLLAEERERLAALEQRWAEEKRLVDELLETRARLRAAAEAVDAGGVPLGEGEVRLDEEQRQALHARLAELQAQLSALQGEEPLILPTVDYQAVASVVADWTGIPVGRMARNEIETVLNLDRHLKKRIIGQDHALEMIAKRIQTSRAGLDNPSKPIGVFMLAGTSGVGKTETALALAEAMYGGEQNVITINMSEFQEAHTVSTLKGAPPGYIGYGEGGVLTEAVRRKPYSVVLLDEVEKAHPDVHEIFFQVFDKGVMEDGEGRVIDFKNTLILLTTNAGTEMIASLCADPELMPEPEAIAKSLREPLLKIFPPALLGRLVTIPYYPLSDDMLKAISRLQLGRIKKRVEATHKVPFEFDEGVVDLIVSRCTETESGGRMIDAILTNTLLPDMSREFLTRMLEGKPLAGVRISSRDNQFHYDFAEAE.

Residues 10–151 enclose the Clp R domain; the sequence is FGKLNSLAYK…KVEALTERFD (142 aa). Repeat stretches follow at residues 13–78 and 88–151; these read LNSL…LDRL and LSSH…ERFD. ATP is bound at residue 237–244; it reads GEAGVGKT. Positions 441 to 559 form a coiled coil; it reads AEVDDSRRRI…AQLSALQGEE (119 aa). 640–647 contributes to the ATP binding site; it reads GTSGVGKT.

This sequence belongs to the ClpA/ClpB family. Interacts with TagJ.

The protein resides in the cytoplasm. Functionally, component of the H1 type VI (H1-T6SS) secretion system that plays a role in the release of toxins targeting both eukaryotic and prokaryotic species. Acts as an AAA(+) ATPase that disassembles the contracted sheath, which resets the systems for reassembly of an extended sheath that is ready to fire again. The sequence is that of AAA+ ATPase ClpV1 (clpV1) from Pseudomonas aeruginosa (strain ATCC 15692 / DSM 22644 / CIP 104116 / JCM 14847 / LMG 12228 / 1C / PRS 101 / PAO1).